The primary structure comprises 182 residues: Crossover junction endodeoxyribonuclease RuvC (182 aa).

Catalysis depends on residues aspartate 7, glutamate 69, and aspartate 141. The Mg(2+) site is built by aspartate 7, glutamate 69, and aspartate 141.

The protein belongs to the RuvC family. Homodimer which binds Holliday junction (HJ) DNA. The HJ becomes 2-fold symmetrical on binding to RuvC with unstacked arms; it has a different conformation from HJ DNA in complex with RuvA. In the full resolvosome a probable DNA-RuvA(4)-RuvB(12)-RuvC(2) complex forms which resolves the HJ. It depends on Mg(2+) as a cofactor.

It is found in the cytoplasm. It carries out the reaction Endonucleolytic cleavage at a junction such as a reciprocal single-stranded crossover between two homologous DNA duplexes (Holliday junction).. The RuvA-RuvB-RuvC complex processes Holliday junction (HJ) DNA during genetic recombination and DNA repair. Endonuclease that resolves HJ intermediates. Cleaves cruciform DNA by making single-stranded nicks across the HJ at symmetrical positions within the homologous arms, yielding a 5'-phosphate and a 3'-hydroxyl group; requires a central core of homology in the junction. The consensus cleavage sequence is 5'-(A/T)TT(C/G)-3'. Cleavage occurs on the 3'-side of the TT dinucleotide at the point of strand exchange. HJ branch migration catalyzed by RuvA-RuvB allows RuvC to scan DNA until it finds its consensus sequence, where it cleaves and resolves the cruciform DNA. The sequence is that of Crossover junction endodeoxyribonuclease RuvC from Delftia acidovorans (strain DSM 14801 / SPH-1).